A 316-amino-acid chain; its full sequence is Nautilin-63 (316 aa).

4 disordered regions span residues 1–26 (IPDL…GPRG), 149–173 (PFPT…VTPF), 189–238 (DSRC…GIAS), and 259–278 (PPTS…GLNK). Residues 10–26 (TLPVLTKGPTGLLGPRG) show a composition bias toward low complexity. Composition is skewed to polar residues over residues 152–163 (TSRSTYGPSGSQ), 207–216 (GHSSPATLNS), and 269–278 (SGYTSDGLNK).

Glycosylated; contains mainly glucose, galactose, galactosamine, glucosamine and glucuronic acid. In terms of tissue distribution, component of the acid-soluble organic matrix of nacreous shell layers (at protein level).

The protein resides in the secreted. Functionally, involved in nacre formation. Affects morphology of calcite crystals in vitro but does not inhibit their formation. Binds chitin. This is Nautilin-63 from Nautilus macromphalus (Bellybutton nautilus).